The sequence spans 215 residues: LexA repressor (215 aa).

Positions 28-48 (RAEIAAELGFSSPNAAEEHLR) form a DNA-binding region, H-T-H motif. Residues Ser133 and Lys170 each act as for autocatalytic cleavage activity in the active site.

This sequence belongs to the peptidase S24 family. Homodimer.

The catalysed reaction is Hydrolysis of Ala-|-Gly bond in repressor LexA.. Functionally, represses a number of genes involved in the response to DNA damage (SOS response), including recA and lexA. In the presence of single-stranded DNA, RecA interacts with LexA causing an autocatalytic cleavage which disrupts the DNA-binding part of LexA, leading to derepression of the SOS regulon and eventually DNA repair. The sequence is that of LexA repressor from Burkholderia thailandensis (strain ATCC 700388 / DSM 13276 / CCUG 48851 / CIP 106301 / E264).